The following is a 420-amino-acid chain: Serine hydroxymethyltransferase (420 aa).

(6S)-5,6,7,8-tetrahydrofolate contacts are provided by residues Leu-121 and 125–127 (GHL). Position 229 is an N6-(pyridoxal phosphate)lysine (Lys-229).

Belongs to the SHMT family. Homodimer. Pyridoxal 5'-phosphate serves as cofactor.

The protein resides in the cytoplasm. It carries out the reaction (6R)-5,10-methylene-5,6,7,8-tetrahydrofolate + glycine + H2O = (6S)-5,6,7,8-tetrahydrofolate + L-serine. It functions in the pathway one-carbon metabolism; tetrahydrofolate interconversion. The protein operates within amino-acid biosynthesis; glycine biosynthesis; glycine from L-serine: step 1/1. Catalyzes the reversible interconversion of serine and glycine with tetrahydrofolate (THF) serving as the one-carbon carrier. This reaction serves as the major source of one-carbon groups required for the biosynthesis of purines, thymidylate, methionine, and other important biomolecules. Also exhibits THF-independent aldolase activity toward beta-hydroxyamino acids, producing glycine and aldehydes, via a retro-aldol mechanism. The sequence is that of Serine hydroxymethyltransferase from Aggregatibacter actinomycetemcomitans (Actinobacillus actinomycetemcomitans).